The sequence spans 367 residues: Isoflavone 4'-O-methyltransferase (367 aa).

Residues 209–212 (VGGG), D233, 233–234 (DQ), 253–254 (DM), and K267 contribute to the S-adenosyl-L-methionine site. The active-site Proton acceptor is H271.

The protein belongs to the class I-like SAM-binding methyltransferase superfamily. Cation-independent O-methyltransferase family. COMT subfamily.

It carries out the reaction a 4'-hydroxyisoflavone + S-adenosyl-L-methionine = a 4'-methoxyisoflavone + S-adenosyl-L-homocysteine + H(+). The catalysed reaction is (2R,3S)-2,4',7-trihydroxyisoflavanone + S-adenosyl-L-methionine = (2R,3S)-2,7-dihydroxy-4'-methoxyisoflavanone + S-adenosyl-L-homocysteine + H(+). Its function is as follows. 2-hydroxyisoflavanone 4'-O-methyltransferase involved in the biosynthesis of formononetin. Can use 2,7,4'-trihydroxyisoflavanone, (+)-6a-hydroxymaackiain or medicarpin as substrate, but not daidzein or (-)-6a-hydroxymaackiain. This is Isoflavone 4'-O-methyltransferase (HI4'OMT) from Glycyrrhiza echinata (Licorice).